We begin with the raw amino-acid sequence, 1012 residues long: Roundabout homolog 4 (1012 aa).

Residues 1–27 form the signal peptide; that stretch reads MGSGGTGLLGTEWPLPLLLLFIMGGEA. Ig-like C2-type domains follow at residues 32–132 and 138–225; these read PQIL…ARLS and EDFQ…ARVS. Disulfide bonds link cysteine 53/cysteine 115 and cysteine 159/cysteine 208. N-linked (GlcNAc...) asparagine glycans are attached at residues asparagine 201 and asparagine 247. Fibronectin type-III domains lie at 249–346 and 348–443; these read TLLN…LPEQ and PSAP…LEQA. N-linked (GlcNAc...) asparagine glycans are attached at residues asparagine 361, asparagine 390, and asparagine 397. 2 disordered regions span residues 533–553 and 586–616; these read TSGS…GLDP and LIAE…AGTS. Residues 534 to 550 show a composition bias toward low complexity; the sequence is SGSRDLSSSSSLSSRLG. The span at 592–601 shows a compositional bias: pro residues; the sequence is SSPPVRPSPK. N-linked (GlcNAc...) asparagine glycosylation is found at asparagine 681 and asparagine 713. Residues 711–801 are disordered; sequence HRNSSELASR…LEEEEDQDSV (91 aa). A compositionally biased stretch (low complexity) spans 745–759; sequence LQAPSSDPLPAAPLS. Residues 760–771 are compositionally biased toward polar residues; it reads VLNSSRPSSPQA. 2 N-linked (GlcNAc...) asparagine glycosylation sites follow: asparagine 762 and asparagine 783. Residues 772-791 are compositionally biased toward low complexity; that stretch reads SFLSCPSPSSSNLSSSSLSS. Phosphoserine is present on residues serine 814 and serine 947. The disordered stretch occupies residues 980–1012; the sequence is RLGRGLPPWPPDSRASSQRSWLTGAVPKAGDSS.

The protein belongs to the immunoglobulin superfamily. ROBO family. As to quaternary structure, interacts with SLIT2 and ENAH. In terms of tissue distribution, expressed specifically in embryo and adult vascular endothelium.

Its function is as follows. Receptor for Slit proteins, at least for SLIT2, and seems to be involved in angiogenesis and vascular patterning. May mediate the inhibition of primary endothelial cell migration by Slit proteins. Involved in the maintenance of endothelial barrier organization and function. The sequence is that of Roundabout homolog 4 (Robo4) from Mus musculus (Mouse).